Consider the following 1774-residue polypeptide: Collagen alpha-1(XVIII) chain (1774 aa).

The signal sequence occupies residues Met1 to Ala26. The segment at Asp27–Gly785 is nonhelical region 1 (NC1). 2 disordered regions span residues Asp47 to Val113 and Leu218 to Lys269. 2 stretches are compositionally biased toward polar residues: residues Lys55–Ser87 and Leu244–Asn256. 2 N-linked (GlcNAc...) asparagine glycosylation sites follow: Asn354 and Asn361. The 118-residue stretch at Thr365 to Ile482 folds into the FZ domain. Intrachain disulfides connect Cys370/Cys433, Cys380/Cys426, Cys417/Cys455, Cys444/Cys479, and Cys448/Cys468. In terms of domain architecture, Laminin G-like spans Gly522–Ser704. Asn585 carries N-linked (GlcNAc...) asparagine glycosylation. The interval Arg681–Ala1458 is disordered. The segment covering Glu708–Thr717 has biased composition (basic and acidic residues). Phosphothreonine is present on Thr730. A triple-helical region 1 (COL1) region spans residues Gly786–Val812. The span at Ala809–Ala824 shows a compositional bias: low complexity. The segment at Val813 to Pro822 is nonhelical region 2 (NC2). A Collagen-like 1 domain is found at Gly823–Asp878. A triple-helical region 2 (COL2) region spans residues Gly823–Ser896. Residues Thr839 to Pro855 show a composition bias toward basic and acidic residues. A compositionally biased stretch (pro residues) spans Arg884–Pro895. The nonhelical region 3 (NC3) stretch occupies residues Phe897 to Arg920. The O-linked (Xyl...) (chondroitin sulfate) serine glycan is linked to Ser910. The interval Gly921 to Gly1042 is triple-helical region 3 (COL3). Residues Phe925–Pro935 show a composition bias toward pro residues. An N-linked (GlcNAc...) asparagine glycan is attached at Asn947. The segment covering Ala951–Lys963 has biased composition (low complexity). 2 consecutive Collagen-like domains span residues Gly953–Gly1007 and Asp1008–Pro1041. Pro residues-rich tracts occupy residues Pro967–Glu982 and Pro1026–Pro1041. A nonhelical region 4 (NC4) region spans residues Phe1043–Asp1065. 4 consecutive Collagen-like domains span residues Gly1066–Gly1117, Glu1118–Pro1147, Pro1162–Gly1202, and Gln1216–Asp1264. The triple-helical region 4 (COL4) stretch occupies residues Gly1066–Val1148. The segment covering Leu1138 to Pro1147 has biased composition (pro residues). A nonhelical region 5 (NC5) region spans residues Ile1149–Pro1162. The tract at residues Gly1163–Ile1204 is triple-helical region 5 (COL5). The interval Phe1205–Lys1217 is nonhelical region 6 (NC6). The triple-helical region 6 (COL6) stretch occupies residues Gly1218–Pro1290. Positions Pro1275–Met1289 are enriched in pro residues. The interval Ile1291–Ser1300 is nonhelical region 7 (NC7). The span at Gly1301–Pro1317 shows a compositional bias: low complexity. The interval Gly1301–Phe1333 is triple-helical region 7 (COL7). The tract at residues Pro1334–Lys1345 is nonhelical region 8 (NC8). Over residues Phe1338 to Glu1362 the composition is skewed to basic and acidic residues. The triple-helical region 8 (COL8) stretch occupies residues Gly1346 to Gly1369. Residues Arg1351–Asp1353 carry the Cell attachment site motif. The interval Phe1370–Pro1376 is nonhelical region 9 (NC9). Composition is skewed to pro residues over residues Pro1376 to Pro1388, Pro1398 to Pro1407, Pro1418 to Pro1431, and Pro1441 to Pro1453. Positions Gly1377–Pro1428 are triple-helical region 9 (COL9). Residues Ser1429 to Pro1441 are nonhelical region 10 (NC10). Residues Gly1442–Ser1459 form a triple-helical region 10 (COL10) region. A nonhelical region 11 (NC11) region spans residues Ala1460 to Lys1774. The segment at Asp1474–Glu1519 is non-collagenous domain 1 association domain. The segment at Val1520–Ala1590 is non-collagenous domain 1 hinge region. Zn(2+) is bound by residues His1591, His1593, Asp1595, His1601, and Asp1666. 2 cysteine pairs are disulfide-bonded: Cys1623-Cys1763 and Cys1725-Cys1755.

The protein belongs to the multiplexin collagen family. Forms homotrimers. Recombinant non-collagenous domain 1 has stronger affinity to NID1, HSPG2 and laminin-1:NID1 complex and lower affinity to FBLN1 and FBLN2 than endostatin. As to quaternary structure, monomeric. Interacts with KDR/VEGFR2. Interacts with the ITGA5:ITGB1 complex. Interacts with NID1, HSPG2, laminin-1:NID1 complex, FBLN1 and FBLN2. Post-translationally, prolines at the third position of the tripeptide repeating unit (G-X-Y) of the triple-helical regions are hydroxylated. In terms of processing, undergoes proteolytic processing by CTSL/cathepsin-L and elastase-like proteases to generate both non-collagenous domain 1 trimers and endostatin monomers. In tissue extracts (brain, skeletal muscle, heart, kidney, testis and liver) predominantly bands of approximately 38 kDa are detected; recombinant non-collagenous domain 1 shows similar mobility. In vitro, several proteolytic cleavage sites in the non-collagenous domain 1 hinge region generating different endostatin-like peptides are reported. Expressed in liver, kidney, lung, skeletal muscle and testis.

It is found in the secreted. Its subcellular location is the extracellular space. The protein localises to the extracellular matrix. The protein resides in the basement membrane. In terms of biological role, probably plays a major role in determining the retinal structure as well as in the closure of the neural tube. Functionally, may regulate extracellular matrix-dependent motility and morphogenesis of endothelial and non-endothelial cells; the function requires homotrimerization and implicates MAPK signaling. Its function is as follows. Potently inhibits endothelial cell proliferation and angiogenesis. May inhibit angiogenesis by binding to the heparan sulfate proteoglycans involved in growth factor signaling. Inhibits VEGFA isoform VEGF165-induced endothelial cell proliferation and migration. Seems to inhibit VEGFA-mediated signaling by blocking the interaction of VEGFA to its receptor KDR/VEGFR2. Modulates endothelial cell migration in an integrin-dependent manner implicating integrin ITGA5:ITGB1 and to a lesser extent ITGAV:ITGB3 and ITGAV:ITGB5. May negatively regulate the activity of homotrimeric non-collagenous domain 1. The protein is Collagen alpha-1(XVIII) chain of Mus musculus (Mouse).